A 216-amino-acid chain; its full sequence is Somatotropin (216 aa).

The first 26 residues, 1–26, serve as a signal peptide directing secretion; the sequence is MATGSQTSWLLTFTLLCLPWPQEAGA. Zn(2+) is bound at residue His-45. A disulfide bond links Cys-78 and Cys-189. A Phosphoserine modification is found at Ser-131. Position 198 (Glu-198) interacts with Zn(2+). Cysteines 206 and 214 form a disulfide.

This sequence belongs to the somatotropin/prolactin family.

The protein localises to the secreted. In terms of biological role, plays an important role in growth control. Its major role in stimulating body growth is to stimulate the liver and other tissues to secrete IGF1. It stimulates both the differentiation and proliferation of myoblasts. It also stimulates amino acid uptake and protein synthesis in muscle and other tissues. This is Somatotropin (GH1) from Spalax ehrenbergi (Middle East blind mole rat).